Consider the following 61-residue polypeptide: Small ribosomal subunit protein uS14 (61 aa).

Cys24, Cys27, Cys40, and Cys43 together coordinate Zn(2+).

It belongs to the universal ribosomal protein uS14 family. Zinc-binding uS14 subfamily. Part of the 30S ribosomal subunit. Contacts proteins S3 and S10. Zn(2+) serves as cofactor.

In terms of biological role, binds 16S rRNA, required for the assembly of 30S particles and may also be responsible for determining the conformation of the 16S rRNA at the A site. This is Small ribosomal subunit protein uS14 from Mycobacterium leprae (strain Br4923).